We begin with the raw amino-acid sequence, 424 residues long: Serine--tRNA ligase (424 aa).

T233 to E235 contributes to the L-serine binding site. ATP contacts are provided by residues R264–E266 and V280. L-serine is bound at residue E287. E351–S354 serves as a coordination point for ATP. S386 provides a ligand contact to L-serine.

The protein belongs to the class-II aminoacyl-tRNA synthetase family. Type-1 seryl-tRNA synthetase subfamily. Homodimer. The tRNA molecule binds across the dimer.

The protein localises to the cytoplasm. It catalyses the reaction tRNA(Ser) + L-serine + ATP = L-seryl-tRNA(Ser) + AMP + diphosphate + H(+). It carries out the reaction tRNA(Sec) + L-serine + ATP = L-seryl-tRNA(Sec) + AMP + diphosphate + H(+). It functions in the pathway aminoacyl-tRNA biosynthesis; selenocysteinyl-tRNA(Sec) biosynthesis; L-seryl-tRNA(Sec) from L-serine and tRNA(Sec): step 1/1. Its function is as follows. Catalyzes the attachment of serine to tRNA(Ser). Is also able to aminoacylate tRNA(Sec) with serine, to form the misacylated tRNA L-seryl-tRNA(Sec), which will be further converted into selenocysteinyl-tRNA(Sec). The polypeptide is Serine--tRNA ligase (Kosmotoga olearia (strain ATCC BAA-1733 / DSM 21960 / TBF 19.5.1)).